Consider the following 329-residue polypeptide: MYSTKCTNFFLEIIFYVIFCTLFLLVLEKMSKLLSWIVIVCLFVFAISSKCSAQNYGINVPITGSMDVVLANSTQDQIGLTSTLCIYYPKAADTEIADPEWKATVTQLLLTKGWPTTSVYLNEYQDLVTFSNDPKLYCDYNIVLAHYTNDVALDISELAEFLLYEWLCNPMDVTLYYYQQTSEPNKWIAMGTNCTIKVCPLNTQTLGIGCQTTNTDTFEILTMSEKLAIIDVVDGVNHKVDYTVATCKINNCIRLNPRENVAIIQVGGPEVLDISENPMVIPKVSRMTRMNWKKWWQVFYTIVDYINTIITTMSKRSRSLDVSSYYYRV.

An N-terminal signal peptide occupies residues 1–53 (MYSTKCTNFFLEIIFYVIFCTLFLLVLEKMSKLLSWIVIVCLFVFAISSKCSA). Asn72 is a glycosylation site (N-linked (GlcNAc...) asparagine; by host). Intrachain disulfides connect Cys85–Cys138, Cys168–Cys252, Cys194–Cys247, and Cys199–Cys210. Asp98 is a binding site for Ca(2+). The interval 168–170 (CNP) is CNP motif; interaction with ITGAV/ITGB3. Gln180 contributes to the Ca(2+) binding site. The N-linked (GlcNAc...) asparagine; by host glycan is linked to Asn193. 7 residues coordinate Ca(2+): Gly209, Thr217, Glu219, Asp231, Val232, Asp234, and Asp304.

The protein belongs to the rotavirus VP7 family. As to quaternary structure, homotrimer; disulfide-linked. 2 Ca(2+) ions bound at each subunit interface in the trimer hold the trimer together. Interacts with the intermediate capsid protein VP6. Interacts with the outer capsid protein VP5*. Post-translationally, N-glycosylated. In terms of processing, the N-terminus is blocked possibly by pyroglutamic acid.

Its subcellular location is the virion. The protein localises to the host endoplasmic reticulum lumen. Functionally, calcium-binding protein that interacts with rotavirus cell receptors once the initial attachment by VP4 has been achieved. Rotavirus attachment and entry into the host cell probably involves multiple sequential contacts between the outer capsid proteins VP4 and VP7, and the cell receptors. Following entry into the host cell, low intracellular or intravesicular Ca(2+) concentration probably causes the calcium-stabilized VP7 trimers to dissociate from the virion. This step is probably necessary for the membrane-disrupting entry step and the release of VP4, which is locked onto the virion by VP7. This Rotavirus A (strain RVA/Chicken/Ireland/Ch2/1979/G7P[X]) (RV-A) protein is Outer capsid glycoprotein VP7.